The following is a 589-amino-acid chain: MAFQRAEGMSIIQALAMTVAEIPVFLYTTFGQSTFSQLRLSPGLRKVLFATALGTVALALAAHQLKRRKHKKKQITADNGGLKLGGVPGSVLPVRRSSSAKKGYSRSRVQSPSSKSNDTLSGISSLDPSKHSSSSHSLASVVAVNSSSINAAPAGPWESPEMDETLEEGDSNAENLYIQGMELFEEALHKWEQALNVGQRCRSNTPASQVNDLLNQSCSEGLSEDSQSGHFAGKLEALLYRAYNLQEEFGTSIPPDDLLMDLEGSLIFPLVESRRALMMDDEGSSTSEDSFFSAAELFETLQLNEVPFLPTKPAAAYEEALKLVHTGEVACRTLRTELLGCYNDQDFLAKLHCVRQAFEVLLLDDGNQLFFGEVGKQMITGLMQKAEKNPKGFLENYEEMLRYALKQDTWATTQRELKGRGVVCMNFFDIALDFILMDAFEDLESPPSSVLAVLRNRWLSDSFKETALATACWSVLKAKRRLLMVPDGFISHFYSVSEHVSPVLAYGFLGPKEHLTEVCNFFKNQIVQYLKDMFDLDNVRYSTIQSLAEDILHLSRRRSDILLGYLGVETVREMNGAVPVQTTEAELDL.

2 consecutive transmembrane segments (helical) span residues 11–31 (IIQA…TTFG) and 42–62 (PGLR…ALAA). Residues 87 to 134 (VPGSVLPVRRSSSAKKGYSRSRVQSPSSKSNDTLSGISSLDPSKHSSS) are disordered. Composition is skewed to low complexity over residues 106-116 (RSRVQSPSSKS) and 123-134 (ISSLDPSKHSSS).

This sequence belongs to the mitoguardin family. In terms of assembly, homodimer and heterodimer; forms heterodimers with miga1.

It is found in the mitochondrion outer membrane. Regulator of mitochondrial fusion: acts by forming homo- and heterodimers at the mitochondrial outer membrane and facilitating the formation of pld6/MitoPLD dimers. May act by regulating phospholipid metabolism via pld6/MitoPLD. This chain is Mitoguardin 2, found in Xenopus laevis (African clawed frog).